Reading from the N-terminus, the 481-residue chain is Cytochrome P450 monooxygenase dpfgJ (481 aa).

Residues 23-43 traverse the membrane as a helical segment; the sequence is LVFTQAAVIGSILFVFLLGLY. N-linked (GlcNAc...) asparagine glycosylation is present at Asn-338. Cys-427 contributes to the heme binding site.

It belongs to the cytochrome P450 family. Heme is required as a cofactor.

Its subcellular location is the membrane. Its pathway is secondary metabolite biosynthesis; terpenoid biosynthesis. Functionally, cytochrome P450 monooxygenase; part of the gene cluster that mediates the biosynthesis of diterpenoid pyrones. The first step of the pathway is the synthesis of the alpha-pyrone moiety by the polyketide synthase dpfgA via condensation of one acetyl-CoA starter unit with 3 malonyl-CoA units and 2 methylations. The alpha-pyrone is then combined with geranylgeranyl pyrophosphate (GGPP) formed by the GGPP synthase dpfgD through the action of the prenyltransferase dpfgC to yield a linear alpha-pyrone diterpenoid. Subsequent steps in the diterpenoid pyrone biosynthetic pathway involve the decalin core formation, which is initiated by the epoxidation of the C10-C11 olefin by the FAD-dependent oxidoreductase dpfgE, and is followed by a cyclization cascade catalyzed by the terpene cyclase dpfgB. The short chain dehydrogenase/reductase dpfgG then oxidizes the 8S hydroxy group to a ketone and the short chain dehydrogenase/reductase dpfgH reduces the ketone to the 8R hydroxy group to yield higginsianin B. Higginsianin B is further methylated by the methyltransferase dpfgI to produce the intermediate named FDDP B. The cytochrome P450 monooxygenase dfgpJ then catalyzes a three-step oxidation at C-27 to generate a carboxylic acid as well as C-26 hydroxylation. Finally, methyltransferase dpfgK methylates the carboxylic acid generated by dpfgJ, yielding the final diterpenoid pyrones from the pathway which were named FDDP D and FDDP E. In Gibberella zeae (strain ATCC MYA-4620 / CBS 123657 / FGSC 9075 / NRRL 31084 / PH-1) (Wheat head blight fungus), this protein is Cytochrome P450 monooxygenase dpfgJ.